A 621-amino-acid polypeptide reads, in one-letter code: Glucose 1,6-bisphosphate synthase (621 aa).

Positions 73 and 175 each coordinate alpha-D-glucose 1,6-bisphosphate. Serine 175 serves as the catalytic Phosphoserine intermediate. Positions 175, 332, 334, and 336 each coordinate Mg(2+). Serine 175 bears the Phosphoserine mark. Residues aspartate 336, arginine 337, glutamate 433, serine 435, and lysine 447 each contribute to the alpha-D-glucose 1,6-bisphosphate site.

This sequence belongs to the phosphohexose mutase family. In terms of tissue distribution, expressed at highest levels in the brain and testis, at intermediate levels in thymus, spleen, lung and skeletal muscle, and at lowest levels in kidney, liver and heart.

It is found in the cytoplasm. The protein localises to the cytosol. It catalyses the reaction (2R)-3-phospho-glyceroyl phosphate + alpha-D-glucose 1-phosphate = alpha-D-glucose 1,6-bisphosphate + (2R)-3-phosphoglycerate + H(+). The catalysed reaction is alpha-D-glucose 6-phosphate + (2R)-3-phospho-glyceroyl phosphate = alpha-D-glucose 1,6-bisphosphate + (2R)-3-phosphoglycerate + H(+). The enzyme catalyses (2R)-3-phospho-glyceroyl phosphate + alpha-D-ribose 1-phosphate = alpha-D-ribose 1,5-bisphosphate + (2R)-3-phosphoglycerate + H(+). It carries out the reaction 2-deoxy-alpha-D-ribose 1-phosphate + (2R)-3-phospho-glyceroyl phosphate = 2-deoxy-alpha-D-ribose 1,5-bisphosphate + (2R)-3-phosphoglycerate + H(+). It catalyses the reaction (2R)-3-phospho-glyceroyl phosphate + alpha-D-mannose 1-phosphate = alpha-D-mannose 1,6-bisphosphate + (2R)-3-phosphoglycerate + H(+). In terms of biological role, glucose 1,6-bisphosphate synthase using 1,3-bisphosphoglycerate as a phosphate donor and a series of 1-phosphate sugars, including glucose 1-phosphate, mannose 1-phosphate, ribose 1-phosphate and deoxyribose 1-phosphate, as acceptors. In vitro, also exhibits very low phosphopentomutase and phosphoglucomutase activity which are most probably not physiologically relevant. This is Glucose 1,6-bisphosphate synthase from Mus musculus (Mouse).